A 430-amino-acid chain; its full sequence is Adenylosuccinate synthetase (430 aa).

GTP is bound by residues 12–18 and 40–42; these read GDEGKGK and GHT. D13 acts as the Proton acceptor in catalysis. 2 residues coordinate Mg(2+): D13 and G40. Residues 13-16, 38-41, T128, R142, Q223, T238, and R302 contribute to the IMP site; these read DEGK and NAGH. The active-site Proton donor is H41. Position 298-304 (298-304) interacts with substrate; sequence TTTGRPR. Residues R304, 330-332, and 412-414 contribute to the GTP site; these read SID and SVG.

Belongs to the adenylosuccinate synthetase family. As to quaternary structure, homodimer. Requires Mg(2+) as cofactor.

The protein localises to the cytoplasm. The enzyme catalyses IMP + L-aspartate + GTP = N(6)-(1,2-dicarboxyethyl)-AMP + GDP + phosphate + 2 H(+). It functions in the pathway purine metabolism; AMP biosynthesis via de novo pathway; AMP from IMP: step 1/2. Plays an important role in the de novo pathway of purine nucleotide biosynthesis. Catalyzes the first committed step in the biosynthesis of AMP from IMP. This Exiguobacterium sibiricum (strain DSM 17290 / CCUG 55495 / CIP 109462 / JCM 13490 / 255-15) protein is Adenylosuccinate synthetase.